The sequence spans 149 residues: Nascent polypeptide-associated complex subunit beta-2 (149 aa).

An NAC-A/B domain is found at 38–103 (DKDNTKLQAE…PKENTLNGLY (66 aa)).

The protein belongs to the NAC-beta family. In terms of assembly, part of the nascent polypeptide-associated complex (NAC), consisting of EGD2 and either EGD1 or BTT1. NAC associates with ribosomes via EGD1 or BTT1.

It localises to the cytoplasm. It is found in the nucleus. Acts as a component of the nascent polypeptide-associated complex (NAC), which promotes mitochondrial protein import by enhancing productive ribosome interactions with the outer mitochondrial membrane. Also blocks the inappropriate interaction of ribosomes translating non-secretory nascent polypeptides with translocation sites in the membrane of the endoplasmic reticulum. BTT1 may act as a transcription factor that exert a negative effect on the expression of several genes that are transcribed by RNA polymerase II. This chain is Nascent polypeptide-associated complex subunit beta-2 (BTT1), found in Saccharomyces cerevisiae (strain YJM789) (Baker's yeast).